The chain runs to 291 residues: tRNA dimethylallyltransferase (291 aa).

9–16 (GTTASGKS) contributes to the ATP binding site. Residue 11 to 16 (TASGKS) coordinates substrate. The tract at residues 34–37 (DSLA) is interaction with substrate tRNA.

Belongs to the IPP transferase family. Monomer. The cofactor is Mg(2+).

The catalysed reaction is adenosine(37) in tRNA + dimethylallyl diphosphate = N(6)-dimethylallyladenosine(37) in tRNA + diphosphate. Catalyzes the transfer of a dimethylallyl group onto the adenine at position 37 in tRNAs that read codons beginning with uridine, leading to the formation of N6-(dimethylallyl)adenosine (i(6)A). This chain is tRNA dimethylallyltransferase, found in Campylobacter concisus (strain 13826).